The primary structure comprises 290 residues: uncharacterized protein (290 aa).

The protein localises to the cytoplasm. This is an uncharacterized protein from Saccharomyces cerevisiae (strain ATCC 204508 / S288c) (Baker's yeast).